Here is a 201-residue protein sequence, read N- to C-terminus: Coiled-coil domain-containing protein 195 (201 aa).

Residues 4-38 (DIQLMRLIQEMRAEIHKLEKENQALRMKLTASSQR) adopt a coiled-coil conformation. Disordered regions lie at residues 28-72 (LRMK…DAAP) and 179-201 (SKNS…IIAE). Positions 179 to 188 (SKNSSSLKHS) are enriched in low complexity. A compositionally biased stretch (polar residues) spans 189–201 (PNQATNQLSIIAE).

The chain is Coiled-coil domain-containing protein 195 from Homo sapiens (Human).